The chain runs to 342 residues: Isopentenyl-diphosphate delta-isomerase (342 aa).

11–12 contributes to the substrate binding site; the sequence is RK. Residues Ser-68, 69–71, Ser-99, and Asn-128 each bind FMN; that span reads SMT. A substrate-binding site is contributed by 99–101; the sequence is SQR. Gln-162 serves as a coordination point for substrate. Glu-163 is a binding site for Mg(2+). FMN contacts are provided by residues Lys-194, Ser-219, Thr-224, 275–277, and 296–297; these read GVR and AK.

It belongs to the IPP isomerase type 2 family. As to quaternary structure, homooctamer. Dimer of tetramers. FMN is required as a cofactor. It depends on NADPH as a cofactor. The cofactor is Mg(2+).

Its subcellular location is the cytoplasm. The catalysed reaction is isopentenyl diphosphate = dimethylallyl diphosphate. Involved in the biosynthesis of isoprenoids. Catalyzes the 1,3-allylic rearrangement of the homoallylic substrate isopentenyl (IPP) to its allylic isomer, dimethylallyl diphosphate (DMAPP). The sequence is that of Isopentenyl-diphosphate delta-isomerase from Legionella pneumophila (strain Lens).